A 327-amino-acid chain; its full sequence is Mitochondrial carnitine carrier (327 aa).

Residues 1–11 show a composition bias toward low complexity; sequence MSSDTSLSESS. Residues 1–29 form a disordered region; it reads MSSDTSLSESSLLKEESGSLTKSRPPIKS. A run of 6 helical transmembrane segments spans residues 33-49, 107-123, 141-162, 196-212, 244-260, and 293-313; these read RENI…GVCA, LGVT…YDVG, MGQM…TAPT, GSLA…ALYF, LAGG…VFPI, and FFPG…ATFL. 3 Solcar repeats span residues 33-126, 139-221, and 237-321; these read RENI…GKKL, LTMG…SKNY, and VNIL…THSL.

The protein belongs to the mitochondrial carrier (TC 2.A.29) family.

Its subcellular location is the mitochondrion inner membrane. Functionally, transports carnitine, acetylcarnitine, propionylcarnitine and to a much lower extent medium- and long-chain acylcarnitines. This Saccharomyces cerevisiae (strain ATCC 204508 / S288c) (Baker's yeast) protein is Mitochondrial carnitine carrier (CRC1).